Here is a 423-residue protein sequence, read N- to C-terminus: AP-1 complex subunit mu-2 (423 aa).

The 254-residue stretch at K168–R421 folds into the MHD domain.

This sequence belongs to the adaptor complexes medium subunit family. As to quaternary structure, adaptor protein complex 1 (AP-1) is a heterotetramer composed of two large adaptins (gamma-type subunit AP1G1 and beta-type subunit AP1B1), a medium adaptin (mu-type subunit AP1M1 or AP1M2) and a small adaptin (sigma-type subunit AP1S1 or AP1S2 or AP1S3). Interacts with P2X4. In terms of processing, phosphorylation of membrane-bound AP1M1/AP1M2 increases its affinity for sorting signals.

The protein localises to the golgi apparatus. It is found in the cytoplasmic vesicle. It localises to the clathrin-coated vesicle membrane. Its function is as follows. Subunit of clathrin-associated adaptor protein complex 1 that plays a role in protein sorting in the trans-Golgi network (TGN) and endosomes. The AP complexes mediate the recruitment of clathrin to membranes and the recognition of sorting signals within the cytosolic tails of transmembrane cargo molecules. In Rattus norvegicus (Rat), this protein is AP-1 complex subunit mu-2 (Ap1m2).